The sequence spans 246 residues: 14-3-3 protein beta/alpha (246 aa).

Position 1 is an N-acetylmethionine (M1). Residue T2 is modified to N-acetylthreonine; in 14-3-3 protein beta/alpha, N-terminally processed. T2 carries the phosphothreonine modification. Position 5 is an N6-acetyllysine (K5). K51 is modified (N6-acetyllysine; alternate). K51 is covalently cross-linked (Glycyl lysine isopeptide (Lys-Gly) (interchain with G-Cter in SUMO2); alternate). S60 bears the Phosphoserine mark. K70 carries the N6-acetyllysine modification. 3'-nitrotyrosine is present on residues Y84 and Y106. K117 is modified (N6-acetyllysine). 2 positions are modified to phosphoserine: S186 and S232.

Belongs to the 14-3-3 family. Homodimer. Interacts with SAMSN1 and PRKCE. Interacts with AKAP13. Interacts with SSH1 and TORC2/CRTC2. Interacts with ABL1; the interaction results in cytoplasmic location of ABL1 and inhibition of cABL-mediated apoptosis. Interacts with ROR2 (dimer); the interaction results in phosphorylation of YWHAB on tyrosine residues. Interacts with GAB2. Interacts with YAP1 (phosphorylated form). Interacts with the phosphorylated (by AKT1) form of SRPK2. Interacts with PKA-phosphorylated AANAT. Interacts with MYO1C. Interacts with SIRT2. Interacts with the 'Thr-369' phosphorylated form of DAPK2. Interacts with PI4KB, TBC1D22A and TBC1D22B. Interacts with the 'Ser-1134' and 'Ser-1161' phosphorylated form of SOS1. Interacts (via phosphorylated form) with YWHAB; this interaction occurs in a protein kinase AKT1-dependent manner. Interacts with SLITRK1. Interacts with SYNPO2 (phosphorylated form); YWHAB competes with ACTN2 for interaction with SYNPO2. Interacts with RIPOR2 (via phosphorylated form); this interaction occurs in a chemokine-dependent manner and does not compete for binding of RIPOR2 with RHOA nor blocks inhibition of RIPOR2-mediated RHOA activity. Interacts with MARK2 and MARK3. Interacts with TESK1; the interaction is dependent on the phosphorylation of TESK1 'Ser-439' and inhibits TESK1 kinase activity. Interacts with MEFV. Interacts with HDAC4. Interacts with ADAM22 (via C-terminus). In terms of processing, the alpha, brain-specific form differs from the beta form in being phosphorylated. Phosphorylated on Ser-60 by protein kinase C delta type catalytic subunit in a sphingosine-dependent fashion. Post-translationally, isoform Short contains a N-acetylmethionine at position 1.

The protein localises to the cytoplasm. Its subcellular location is the melanosome. Adapter protein implicated in the regulation of a large spectrum of both general and specialized signaling pathways. Binds to a large number of partners, usually by recognition of a phosphoserine or phosphothreonine motif. Binding generally results in the modulation of the activity of the binding partner. Negative regulator of osteogenesis. Blocks the nuclear translocation of the phosphorylated form (by AKT1) of SRPK2 and antagonizes its stimulatory effect on cyclin D1 expression resulting in blockage of neuronal apoptosis elicited by SRPK2. Negative regulator of signaling cascades that mediate activation of MAP kinases via AKAP13. This Rattus norvegicus (Rat) protein is 14-3-3 protein beta/alpha (Ywhab).